A 363-amino-acid polypeptide reads, in one-letter code: S-adenosylmethionine:tRNA ribosyltransferase-isomerase (363 aa).

It belongs to the QueA family. As to quaternary structure, monomer.

It localises to the cytoplasm. It carries out the reaction 7-aminomethyl-7-carbaguanosine(34) in tRNA + S-adenosyl-L-methionine = epoxyqueuosine(34) in tRNA + adenine + L-methionine + 2 H(+). It participates in tRNA modification; tRNA-queuosine biosynthesis. Its function is as follows. Transfers and isomerizes the ribose moiety from AdoMet to the 7-aminomethyl group of 7-deazaguanine (preQ1-tRNA) to give epoxyqueuosine (oQ-tRNA). In Haemophilus influenzae (strain PittGG), this protein is S-adenosylmethionine:tRNA ribosyltransferase-isomerase.